A 181-amino-acid polypeptide reads, in one-letter code: uncharacterized protein (181 aa).

A run of 2 helical transmembrane segments spans residues 24-46 (IAAV…LLNV) and 55-77 (GIVA…YILL).

The protein localises to the cell membrane. This is an uncharacterized protein from Archaeoglobus fulgidus (strain ATCC 49558 / DSM 4304 / JCM 9628 / NBRC 100126 / VC-16).